A 486-amino-acid polypeptide reads, in one-letter code: Protein nucleotidyltransferase YdiU (486 aa).

8 residues coordinate ATP: G90, G92, R93, K113, D125, G126, R176, and R183. The Proton acceptor role is filled by D252. Residues N253 and D262 each contribute to the Mg(2+) site. Position 262 (D262) interacts with ATP.

The protein belongs to the SELO family. The cofactor is Mg(2+). It depends on Mn(2+) as a cofactor.

It catalyses the reaction L-seryl-[protein] + ATP = 3-O-(5'-adenylyl)-L-seryl-[protein] + diphosphate. The catalysed reaction is L-threonyl-[protein] + ATP = 3-O-(5'-adenylyl)-L-threonyl-[protein] + diphosphate. The enzyme catalyses L-tyrosyl-[protein] + ATP = O-(5'-adenylyl)-L-tyrosyl-[protein] + diphosphate. It carries out the reaction L-histidyl-[protein] + UTP = N(tele)-(5'-uridylyl)-L-histidyl-[protein] + diphosphate. It catalyses the reaction L-seryl-[protein] + UTP = O-(5'-uridylyl)-L-seryl-[protein] + diphosphate. The catalysed reaction is L-tyrosyl-[protein] + UTP = O-(5'-uridylyl)-L-tyrosyl-[protein] + diphosphate. Functionally, nucleotidyltransferase involved in the post-translational modification of proteins. It can catalyze the addition of adenosine monophosphate (AMP) or uridine monophosphate (UMP) to a protein, resulting in modifications known as AMPylation and UMPylation. The protein is Protein nucleotidyltransferase YdiU of Stutzerimonas stutzeri (strain A1501) (Pseudomonas stutzeri).